A 446-amino-acid chain; its full sequence is Tubulin beta chain (446 aa).

Residues Gln11, Glu69, Ser138, Gly142, Thr143, Gly144, Asn204, and Asn226 each contribute to the GTP site. Glu69 contributes to the Mg(2+) binding site. Positions Tyr422 to Glu446 are disordered. Residues Gly429 to Glu446 are compositionally biased toward acidic residues.

Belongs to the tubulin family. As to quaternary structure, dimer of alpha and beta chains. A typical microtubule is a hollow water-filled tube with an outer diameter of 25 nm and an inner diameter of 15 nM. Alpha-beta heterodimers associate head-to-tail to form protofilaments running lengthwise along the microtubule wall with the beta-tubulin subunit facing the microtubule plus end conferring a structural polarity. Microtubules usually have 13 protofilaments but different protofilament numbers can be found in some organisms and specialized cells. It depends on Mg(2+) as a cofactor.

It is found in the cytoplasm. The protein localises to the cytoskeleton. In terms of biological role, tubulin is the major constituent of microtubules, a cylinder consisting of laterally associated linear protofilaments composed of alpha- and beta-tubulin heterodimers. Microtubules grow by the addition of GTP-tubulin dimers to the microtubule end, where a stabilizing cap forms. Below the cap, tubulin dimers are in GDP-bound state, owing to GTPase activity of alpha-tubulin. The protein is Tubulin beta chain (TUB2) of Gibberella zeae (strain ATCC MYA-4620 / CBS 123657 / FGSC 9075 / NRRL 31084 / PH-1) (Wheat head blight fungus).